The sequence spans 128 residues: Large ribosomal subunit protein uL22 (128 aa).

This sequence belongs to the universal ribosomal protein uL22 family. As to quaternary structure, part of the 50S ribosomal subunit.

This protein binds specifically to 23S rRNA; its binding is stimulated by other ribosomal proteins, e.g. L4, L17, and L20. It is important during the early stages of 50S assembly. It makes multiple contacts with different domains of the 23S rRNA in the assembled 50S subunit and ribosome. In terms of biological role, the globular domain of the protein is located near the polypeptide exit tunnel on the outside of the subunit, while an extended beta-hairpin is found that lines the wall of the exit tunnel in the center of the 70S ribosome. This chain is Large ribosomal subunit protein uL22, found in Rhodopseudomonas palustris (strain HaA2).